The primary structure comprises 280 residues: MAISKKILPLLSIATIFLLLLNKAHSLGSLSFGYNNFEQGDERNLILQGDATFSASKGIQLTKVDDNGTPAKSTVGRVLHSTQVRLWEKSTNRLTNFQAQFSFVINSPIDNGADGIAFFIAAPDSEIPKNSAGGTLGLSDPSTAQNPSANQVLAVEFDTFYAQDSNGWDPNYQHIGFDVDPIKSAATTKWERRNGQTLNVLVSYDANSKNLQVTASYPDGQSYQVSYNVDLRDYLPEWGRVGFSAASGQQYQSHGLQSWSFTSTLLYTSPHYLKLGRFMI.

An N-terminal signal peptide occupies residues 1–26 (MAISKKILPLLSIATIFLLLLNKAHS). A carbohydrate contacts are provided by aspartate 114 and glycine 134. Glutamate 156 and aspartate 158 together coordinate Mn(2+). Residues aspartate 158 and phenylalanine 160 each coordinate Ca(2+). 2 residues coordinate a carbohydrate: serine 165 and asparagine 166. Ca(2+)-binding residues include asparagine 166 and aspartate 169. Mn(2+)-binding residues include aspartate 169 and histidine 174. Residues glycine 248 and glutamine 250 each coordinate a carbohydrate.

This sequence belongs to the leguminous lectin family. In terms of assembly, homodimer. Glycosylated.

Functionally, alpha-methyl-D-mannoside-specific lectin. Has hemagglutinating activity towards rabbit erythrocytes. Binds to cytokinins and significantly inhibits physiological effects of cytokinin activity such as cotyledon expansion and delayed leaf senescence. The polypeptide is Alpha-methyl-mannoside-specific lectin (Arachis hypogaea (Peanut)).